A 388-amino-acid chain; its full sequence is Probable nitrate transporter NarT (388 aa).

The next 12 membrane-spanning stretches (helical) occupy residues 14–34, 45–65, 69–89, 98–118, 139–159, 161–181, 206–226, 242–262, 276–296, 297–317, 330–350, and 359–379; these read TLSL…MPMI, ISIV…PFGY, IIGA…PIFL, MLML…VGVT, GNLG…AIGW, STVR…FFLG, YYLS…GIFL, GIRA…GGII, FLFM…ILFT, VGCL…FKLV, GIVS…ITYV, and LAFI…WHLS.

The protein belongs to the major facilitator superfamily. Nitrate/nitrite porter (TC 2.A.1.8) family.

The protein resides in the cell membrane. Functionally, probably required for nitrate uptake under anoxic conditions. Also possibly involved in excretion of nitrite produced by the dissimilatory reduction of nitrate. This chain is Probable nitrate transporter NarT (narT), found in Staphylococcus carnosus (strain TM300).